Here is a 184-residue protein sequence, read N- to C-terminus: Photosystem I assembly protein Ycf4 (184 aa).

Transmembrane regions (helical) follow at residues 22–42 (FCWA…GISS) and 64–84 (IVMS…WSTI).

Belongs to the Ycf4 family.

It localises to the plastid. Its subcellular location is the chloroplast thylakoid membrane. In terms of biological role, seems to be required for the assembly of the photosystem I complex. In Piper cenocladum (Ant piper), this protein is Photosystem I assembly protein Ycf4.